Here is a 336-residue protein sequence, read N- to C-terminus: Succinylglutamate desuccinylase (336 aa).

Residues histidine 59, glutamate 62, and histidine 151 each contribute to the Zn(2+) site. Residue glutamate 215 is part of the active site.

This sequence belongs to the AspA/AstE family. Succinylglutamate desuccinylase subfamily. It depends on Zn(2+) as a cofactor.

The enzyme catalyses N-succinyl-L-glutamate + H2O = L-glutamate + succinate. It functions in the pathway amino-acid degradation; L-arginine degradation via AST pathway; L-glutamate and succinate from L-arginine: step 5/5. Its function is as follows. Transforms N(2)-succinylglutamate into succinate and glutamate. The chain is Succinylglutamate desuccinylase from Pseudomonas fluorescens (strain ATCC BAA-477 / NRRL B-23932 / Pf-5).